The following is a 115-amino-acid chain: uncharacterized protein (115 aa).

The next 3 helical transmembrane spans lie at 7–27 (TLIF…IWFD), 40–60 (YALT…LLAA), and 72–92 (IVLV…YFYL).

The protein resides in the cell membrane. This is an uncharacterized protein from Haemophilus influenzae (strain ATCC 51907 / DSM 11121 / KW20 / Rd).